The sequence spans 483 residues: Cysteine--tRNA ligase (483 aa).

C29 contacts Zn(2+). Positions 31–41 (PTVYGHAHLGH) match the 'HIGH' region motif. Zn(2+)-binding residues include C221, H246, and E250. A 'KMSKS' region motif is present at residues 278–282 (KMGKS). K281 provides a ligand contact to ATP.

The protein belongs to the class-I aminoacyl-tRNA synthetase family. In terms of assembly, monomer. Requires Zn(2+) as cofactor.

It is found in the cytoplasm. The enzyme catalyses tRNA(Cys) + L-cysteine + ATP = L-cysteinyl-tRNA(Cys) + AMP + diphosphate. The sequence is that of Cysteine--tRNA ligase from Chlorobium luteolum (strain DSM 273 / BCRC 81028 / 2530) (Pelodictyon luteolum).